Reading from the N-terminus, the 258-residue chain is Small ribosomal subunit protein uS2 (258 aa).

The protein belongs to the universal ribosomal protein uS2 family.

This Streptococcus suis (strain 05ZYH33) protein is Small ribosomal subunit protein uS2.